The primary structure comprises 328 residues: tRNA dimethylallyltransferase (328 aa).

Position 10–17 (10–17 (GPTASGKT)) interacts with ATP. 12 to 17 (TASGKT) provides a ligand contact to substrate.

Belongs to the IPP transferase family. Monomer. Requires Mg(2+) as cofactor.

The enzyme catalyses adenosine(37) in tRNA + dimethylallyl diphosphate = N(6)-dimethylallyladenosine(37) in tRNA + diphosphate. Functionally, catalyzes the transfer of a dimethylallyl group onto the adenine at position 37 in tRNAs that read codons beginning with uridine, leading to the formation of N6-(dimethylallyl)adenosine (i(6)A). This is tRNA dimethylallyltransferase from Bifidobacterium longum subsp. infantis (strain ATCC 15697 / DSM 20088 / JCM 1222 / NCTC 11817 / S12).